Here is a 530-residue protein sequence, read N- to C-terminus: Chaperonin GroEL, chloroplastic (530 aa).

ATP contacts are provided by residues 29 to 32, 86 to 90, G414, 480 to 482, and D496; these read TLGP, DGTTT, and DAL.

The protein belongs to the chaperonin (HSP60) family. In terms of assembly, forms a cylinder of 14 subunits composed of two heptameric rings stacked back-to-back. Interacts with the co-chaperonin GroES.

Its subcellular location is the plastid. It is found in the chloroplast. The catalysed reaction is ATP + H2O + a folded polypeptide = ADP + phosphate + an unfolded polypeptide.. In terms of biological role, together with its co-chaperonin GroES, plays an essential role in assisting protein folding. The GroEL-GroES system forms a nano-cage that allows encapsulation of the non-native substrate proteins and provides a physical environment optimized to promote and accelerate protein folding. The polypeptide is Chaperonin GroEL, chloroplastic (Cyanidium caldarium (Red alga)).